The chain runs to 100 residues: Large ribosomal subunit protein bL21 (100 aa).

It belongs to the bacterial ribosomal protein bL21 family. As to quaternary structure, part of the 50S ribosomal subunit. Contacts protein L20.

Functionally, this protein binds to 23S rRNA in the presence of protein L20. This Wolbachia pipientis subsp. Culex pipiens (strain wPip) protein is Large ribosomal subunit protein bL21.